We begin with the raw amino-acid sequence, 220 residues long: Endonuclease NucS (220 aa).

It belongs to the NucS endonuclease family.

It localises to the cytoplasm. In terms of biological role, cleaves both 3' and 5' ssDNA extremities of branched DNA structures. In Frankia alni (strain DSM 45986 / CECT 9034 / ACN14a), this protein is Endonuclease NucS.